A 92-amino-acid polypeptide reads, in one-letter code: Small ribosomal subunit protein uS19c (92 aa).

Belongs to the universal ribosomal protein uS19 family.

It localises to the plastid. It is found in the chloroplast. Functionally, protein S19 forms a complex with S13 that binds strongly to the 16S ribosomal RNA. In Spirogyra maxima (Green alga), this protein is Small ribosomal subunit protein uS19c.